A 443-amino-acid chain; its full sequence is Probable nitrate/nitrite antiporter NarK1 (443 aa).

The next 12 membrane-spanning stretches (helical) occupy residues T23–I43, W56–A76, Y79–V99, L108–W128, L142–A164, F182–T202, F230–K250, V255–S275, F298–Y318, F329–I349, A368–F388, and T401–L421.

It belongs to the major facilitator superfamily. Nitrate/nitrite porter (TC 2.A.1.8) family.

It is found in the cell membrane. It catalyses the reaction nitrate(in) + nitrite(out) = nitrate(out) + nitrite(in). Probable nitrate/nitrite antiporter that may be involved in nitrate import and nitrite export during anaerobic growth. The polypeptide is Probable nitrate/nitrite antiporter NarK1 (Thermus thermophilus).